We begin with the raw amino-acid sequence, 108 residues long: uncharacterized protein (108 aa).

The span at 1-14 shows a compositional bias: polar residues; that stretch reads MSDSNSRLVYSTET. The tract at residues 1–31 is disordered; the sequence is MSDSNSRLVYSTETGRIDEPKAAPVRPKGDG. A compositionally biased stretch (basic and acidic residues) spans 15 to 31; it reads GRIDEPKAAPVRPKGDG.

This sequence belongs to the SUI1 family.

This is an uncharacterized protein from Escherichia coli (strain K12).